The chain runs to 139 residues: Nucleoside diphosphate kinase (139 aa).

ATP-binding residues include Lys-11, Phe-59, Arg-87, Thr-93, Arg-104, and Asn-114. His-117 functions as the Pros-phosphohistidine intermediate in the catalytic mechanism.

The protein belongs to the NDK family. In terms of assembly, homotetramer. Mg(2+) is required as a cofactor.

It localises to the cytoplasm. The enzyme catalyses a 2'-deoxyribonucleoside 5'-diphosphate + ATP = a 2'-deoxyribonucleoside 5'-triphosphate + ADP. It carries out the reaction a ribonucleoside 5'-diphosphate + ATP = a ribonucleoside 5'-triphosphate + ADP. Functionally, major role in the synthesis of nucleoside triphosphates other than ATP. The ATP gamma phosphate is transferred to the NDP beta phosphate via a ping-pong mechanism, using a phosphorylated active-site intermediate. The polypeptide is Nucleoside diphosphate kinase (Wolbachia pipientis wMel).